The sequence spans 172 residues: Orotate phosphoribosyltransferase (172 aa).

5-phospho-alpha-D-ribose 1-diphosphate contacts are provided by residues Arg-88, Lys-89, Lys-92, His-94, and 113-121 (EDVTTSGGS). Thr-117 and Arg-145 together coordinate orotate.

The protein belongs to the purine/pyrimidine phosphoribosyltransferase family. PyrE subfamily. Homodimer. Mg(2+) is required as a cofactor.

The catalysed reaction is orotidine 5'-phosphate + diphosphate = orotate + 5-phospho-alpha-D-ribose 1-diphosphate. It functions in the pathway pyrimidine metabolism; UMP biosynthesis via de novo pathway; UMP from orotate: step 1/2. In terms of biological role, catalyzes the transfer of a ribosyl phosphate group from 5-phosphoribose 1-diphosphate to orotate, leading to the formation of orotidine monophosphate (OMP). The protein is Orotate phosphoribosyltransferase of Methanospirillum hungatei JF-1 (strain ATCC 27890 / DSM 864 / NBRC 100397 / JF-1).